The following is a 37-amino-acid chain: Potassium channel toxin alpha-KTx 15.3 (37 aa).

Q1 bears the Pyrrolidone carboxylic acid mark. 3 disulfides stabilise this stretch: C8–C28, C13–C33, and C17–C35.

As to expression, expressed by the venom gland.

It localises to the secreted. Functionally, inhibits A-type (Kv4) voltage-gated potassium channels of striated neurons (Ki=131 nM), probably by acting as a pore blocker. Has also been shown to block ERG1/Kv11.1/KCNH2 potassium channels (IC(50)=7.9 uM). The presence of the Kv4-associated proteins DPP6 or DPP10 is mandatory to have high-affinity blockade of Kv4.2/KCND2 and Kv4.3/KCND3 channels (80-90% inhibition at 500 nM of toxin). In contrast, the presence of the Kv4-associated protein KChIP1/KCNIP1 does not enhance the affinity blockade (only 40% inhibition at 500 nM). In adult rat brain, the toxin binds to sites in the striatum, and cerebellum. It shares the same target in rat brain than AaTX1 (AC Q867F4) and BmTX3 (AC Q8I0L5). In DPP6 knockout mice, A-type currents are about 20-fold less affected by the toxin. In rodent models of Parkinson's disease, the toxin reduces motor symptoms and emotional and cognitive symptoms. In Androctonus mauritanicus mauritanicus (Scorpion), this protein is Potassium channel toxin alpha-KTx 15.3.